We begin with the raw amino-acid sequence, 309 residues long: D-alanine--D-alanine ligase (309 aa).

The ATP-grasp domain occupies 109 to 304 (KMVWAACGLP…FTALCLAILE (196 aa)). 135 to 190 (VAELGLPIFVKPVHEGSSMGATKVTAASQLKAAWERAARFDDLVLAEEFIVGAELT) is a binding site for ATP. Residues Asp-258, Glu-271, and Asn-273 each contribute to the Mg(2+) site.

The protein belongs to the D-alanine--D-alanine ligase family. Mg(2+) serves as cofactor. Requires Mn(2+) as cofactor.

Its subcellular location is the cytoplasm. It carries out the reaction 2 D-alanine + ATP = D-alanyl-D-alanine + ADP + phosphate + H(+). It functions in the pathway cell wall biogenesis; peptidoglycan biosynthesis. In terms of biological role, cell wall formation. In Aromatoleum aromaticum (strain DSM 19018 / LMG 30748 / EbN1) (Azoarcus sp. (strain EbN1)), this protein is D-alanine--D-alanine ligase.